Consider the following 293-residue polypeptide: Methoxy mycolic acid synthase MmaA3 (293 aa).

S-adenosyl-L-methionine-binding positions include Tyr39–Ser40, Gly78–Gly80, Thr100–Gln105, Trp129–Ala130, and Ile142. Cys275 is an active-site residue.

This sequence belongs to the CFA/CMAS family.

The protein operates within lipid metabolism; mycolic acid biosynthesis. In terms of biological role, involved in the biosynthesis of methoxymycolic acid. It catalyzes the O-methylation of the hydroxy group of the hydroxymycolate to form a methyl ether. In Mycobacterium bovis (strain ATCC BAA-935 / AF2122/97), this protein is Methoxy mycolic acid synthase MmaA3 (cmaB).